The chain runs to 137 residues: Basic phospholipase A2 homolog Pgo-K49 (137 aa).

An N-terminal signal peptide occupies residues 1-16 (MRTLLIVAVLLVGVEG). Cystine bridges form between Cys-42–Cys-131, Cys-44–Cys-60, Cys-59–Cys-111, Cys-65–Cys-137, Cys-66–Cys-104, Cys-73–Cys-97, and Cys-91–Cys-102. The segment at 121 to 133 (KKYKIHMKFFCKK) is important for membrane-damaging activities in eukaryotes and bacteria; heparin-binding.

Expressed by the venom gland.

It localises to the secreted. Functionally, snake venom phospholipase A2 homolog that lacks enzymatic activity. Is myotoxic. A model of myotoxic mechanism has been proposed: an apo Lys49-PLA2 is activated by the entrance of a hydrophobic molecule (e.g. fatty acid) at the hydrophobic channel of the protein leading to a reorientation of a monomer. This reorientation causes a transition between 'inactive' to 'active' states, causing alignment of C-terminal and membrane-docking sites (MDoS) side-by-side and putting the membrane-disruption sites (MDiS) in the same plane, exposed to solvent and in a symmetric position for both monomers. The MDoS region stabilizes the toxin on membrane by the interaction of charged residues with phospholipid head groups. Subsequently, the MDiS region destabilizes the membrane with penetration of hydrophobic residues. This insertion causes a disorganization of the membrane, allowing an uncontrolled influx of ions (i.e. calcium and sodium), and eventually triggering irreversible intracellular alterations and cell death. This Cerrophidion godmani (Porthidium godmani) protein is Basic phospholipase A2 homolog Pgo-K49.